The sequence spans 418 residues: Gamma-glutamyl phosphate reductase (418 aa).

This sequence belongs to the gamma-glutamyl phosphate reductase family.

It is found in the cytoplasm. It catalyses the reaction L-glutamate 5-semialdehyde + phosphate + NADP(+) = L-glutamyl 5-phosphate + NADPH + H(+). The protein operates within amino-acid biosynthesis; L-proline biosynthesis; L-glutamate 5-semialdehyde from L-glutamate: step 2/2. In terms of biological role, catalyzes the NADPH-dependent reduction of L-glutamate 5-phosphate into L-glutamate 5-semialdehyde and phosphate. The product spontaneously undergoes cyclization to form 1-pyrroline-5-carboxylate. This chain is Gamma-glutamyl phosphate reductase, found in Marinobacter nauticus (strain ATCC 700491 / DSM 11845 / VT8) (Marinobacter aquaeolei).